The primary structure comprises 265 residues: Probable DNA replication complex GINS protein PSF3 (265 aa).

The tract at residues 180 to 265 (ISTSSNNKNN…KKRKRMFDDE (86 aa)) is disordered. The span at 183–246 (SSNNKNNSSN…NNNNNSQNSS (64 aa)) shows a compositional bias: low complexity. Over residues 255–265 (VKKRKRMFDDE) the composition is skewed to basic residues.

The protein belongs to the GINS3/PSF3 family. In terms of assembly, component of the GINS complex which is a heterotetramer of gins1, gins2, gins3 and gins4.

It localises to the nucleus. Functionally, the GINS complex plays an essential role in the initiation of DNA replication. The chain is Probable DNA replication complex GINS protein PSF3 (gins3) from Dictyostelium discoideum (Social amoeba).